The primary structure comprises 310 residues: MEGFSPPINTAQVDAKTKLDEKVDYSNLPCPVLYEELNREATMALKPELFEGFRLDYNKSLNQKFFLSHSILMGPTEVPNPTPSSEIIKIPTANYDFGAGFIDPKLYLIGRITTDGRLNARAKFDLTDNFSVKANALLTDEEDKSQGHLVIDYKGSDYRTQLQLGNNSVYAANYIQHVTPHLSLGGEAFWLGQQLMSGVGYAARYETDKTVASGQIASTGVAVMNYVHKVSEKLSFATDFIYNYLSRDVTASVGYDLITRQSRLRGKVDSNGVVAAYLEEQLPIGLRFLLSAEVDHVKKDYKFGFGVNAF.

Methionine 1 is subject to N-acetylmethionine.

Belongs to the Tom40 family. Forms part of the preprotein translocase complex of the outer mitochondrial membrane (TOM complex) which consists of at least 6 different proteins (TOM5, TOM6, TOM7, TOM20, TOM22/TOM9 and TOM40). Present in a large lipid-enriched complex called mitochondrial transmembrane lipoprotein (MTL) complex made of proteins located in the two mitochondrial membranes, including the TOM complex and the core components of the MICOS complex and containing at least digalactosyldiacylglycerol (DGDG). Binds to MIC60. Component of a mitochondrial large protein complex that contains, at least, MIC60, DGS1, TOM40, TOM20 proteins, and petC/RISP. As to expression, expressed in roots, flowers, young cotyledons and leaves.

The protein localises to the mitochondrion outer membrane. Its function is as follows. Central component of the receptor complex responsible for the recognition and translocation of cytosolically synthesized mitochondrial preproteins. Together with TOM22 functions as the transit peptide receptor at the surface of the mitochondrion outer membrane and facilitates the movement of preproteins into the translocation pore. Directly involved in the pore formation. This chain is Probable mitochondrial import receptor subunit TOM40-2, found in Arabidopsis thaliana (Mouse-ear cress).